The chain runs to 365 residues: Saoe class I histocompatibility antigen, C alpha chain (365 aa).

A signal peptide spans 1–24 (MTIMAPRTLLLLLSGALSVTETWA). Residues 25–114 (GSHSMRYFST…LLGYYNQSEA (90 aa)) are alpha-1. Topologically, residues 25 to 308 (GSHSMRYFST…EPPSQPTIPI (284 aa)) are extracellular. Asn-110 is a glycosylation site (N-linked (GlcNAc...) asparagine). An alpha-2 region spans residues 115 to 206 (GFHTIQWMYG…ENGKEMLQRA (92 aa)). 2 disulfides stabilise this stretch: Cys-125–Cys-188 and Cys-227–Cys-283. Residues 207–298 (EPPKTHVTHH…GLPEPFTLRW (92 aa)) are alpha-3. Positions 209-297 (PKTHVTHHPV…EGLPEPFTLR (89 aa)) constitute an Ig-like C1-type domain. A connecting peptide region spans residues 299–308 (EPPSQPTIPI). The helical transmembrane segment at 309–332 (MGIVAILAILGAVVTGAVVAAVMW) threads the bilayer. Residues 333–365 (RKKSSDKKGGSYSQAARSDSAQGSDVSLTACKV) lie on the Cytoplasmic side of the membrane. Positions 337-365 (SDKKGGSYSQAARSDSAQGSDVSLTACKV) are disordered. Residues 346-359 (QAARSDSAQGSDVS) are compositionally biased toward polar residues. Ser-356 and Ser-359 each carry phosphoserine.

This sequence belongs to the MHC class I family. In terms of assembly, heterodimer of an alpha chain and a beta chain (beta-2-microglobulin).

The protein localises to the membrane. Involved in the presentation of foreign antigens to the immune system. The protein is Saoe class I histocompatibility antigen, C alpha chain of Saguinus oedipus (Cotton-top tamarin).